The primary structure comprises 289 residues: Acetyl-coenzyme A carboxylase carboxyl transferase subunit beta (289 aa).

The region spanning Val28–Ser289 is the CoA carboxyltransferase N-terminal domain. 4 residues coordinate Zn(2+): Cys32, Cys35, Cys51, and Cys54. The C4-type zinc finger occupies Cys32 to Cys54.

Belongs to the AccD/PCCB family. As to quaternary structure, acetyl-CoA carboxylase is a heterohexamer composed of biotin carboxyl carrier protein (AccB), biotin carboxylase (AccC) and two subunits each of ACCase subunit alpha (AccA) and ACCase subunit beta (AccD). Zn(2+) is required as a cofactor.

It is found in the cytoplasm. The catalysed reaction is N(6)-carboxybiotinyl-L-lysyl-[protein] + acetyl-CoA = N(6)-biotinyl-L-lysyl-[protein] + malonyl-CoA. It functions in the pathway lipid metabolism; malonyl-CoA biosynthesis; malonyl-CoA from acetyl-CoA: step 1/1. In terms of biological role, component of the acetyl coenzyme A carboxylase (ACC) complex. Biotin carboxylase (BC) catalyzes the carboxylation of biotin on its carrier protein (BCCP) and then the CO(2) group is transferred by the transcarboxylase to acetyl-CoA to form malonyl-CoA. This is Acetyl-coenzyme A carboxylase carboxyl transferase subunit beta from Bacillus thuringiensis (strain Al Hakam).